We begin with the raw amino-acid sequence, 785 residues long: (+)-copalyl diphosphate synthase 3, chloroplastic (785 aa).

Substrate is bound at residue Lys-238. 2 residues coordinate Mg(2+): Asp-371 and Asp-373. Residues Asp-371 to Asp-374 carry the DXDD motif motif. Lys-457 provides a ligand contact to substrate.

This sequence belongs to the terpene synthase family. It depends on Mg(2+) as a cofactor. Present in both leaves and flowers, with higher levels in leaves.

It localises to the plastid. It is found in the chloroplast. It catalyses the reaction (2E,6E,10E)-geranylgeranyl diphosphate = (+)-copalyl diphosphate. Its pathway is secondary metabolite biosynthesis; terpenoid biosynthesis. Functionally, involved in the biosynthesis of labdane-type diterpenoid including marrubiin and other labdane-related furanoid diterpenoids with potential applications as anti-diabetics, analgesics or vasorelaxants. Terpene synthase that produces (+)-copalyl diphosphate ((+)-CPP) from geranylgeranyl diphosphate (GGPP). This is (+)-copalyl diphosphate synthase 3, chloroplastic from Marrubium vulgare (White horehound).